A 689-amino-acid polypeptide reads, in one-letter code: Translation initiation factor IF-2 (689 aa).

Positions 41-109 (DYERVFGGGN…EAPAAEEREA (69 aa)) are disordered. A compositionally biased stretch (basic residues) spans 61–70 (RKGRQKKRRR). A compositionally biased stretch (low complexity) spans 80-94 (RGPRAAAPSRPSRGR). Over residues 96–109 (AAREEAPAAEEREA) the composition is skewed to basic and acidic residues. In terms of domain architecture, tr-type G spans 192–361 (EKPPVITVMG…LVVAELEELR (170 aa)). The G1 stretch occupies residues 201-208 (GHVDHGKT). 201–208 (GHVDHGKT) lines the GTP pocket. A G2 region spans residues 226 to 230 (GITQH). Residues 247–250 (DTPG) form a G3 region. GTP is bound by residues 247 to 251 (DTPGH) and 301 to 304 (NKID). The tract at residues 301–304 (NKID) is G4. The G5 stretch occupies residues 337-339 (SAK).

Belongs to the TRAFAC class translation factor GTPase superfamily. Classic translation factor GTPase family. IF-2 subfamily.

The protein resides in the cytoplasm. Functionally, one of the essential components for the initiation of protein synthesis. Protects formylmethionyl-tRNA from spontaneous hydrolysis and promotes its binding to the 30S ribosomal subunits. Also involved in the hydrolysis of GTP during the formation of the 70S ribosomal complex. The polypeptide is Translation initiation factor IF-2 (Rubrobacter xylanophilus (strain DSM 9941 / JCM 11954 / NBRC 16129 / PRD-1)).